The chain runs to 265 residues: Putative 2-aminoethylphosphonate transport system permease protein PhnV (265 aa).

A run of 6 helical transmembrane segments spans residues 13–33, 69–89, 104–124, 131–151, 185–205, and 233–253; these read GVVA…VILM, LTIG…AALA, VFYL…LVAF, MNGT…AFTF, LPLL…LSMG, and NIAD…LLMM. An ABC transmembrane type-1 domain is found at 65–253; sequence LLASLTIGFC…LVAITLLLMM (189 aa).

The protein belongs to the binding-protein-dependent transport system permease family.

It is found in the cell inner membrane. Probably part of the PhnSTUV complex (TC 3.A.1.11.5) involved in 2-aminoethylphosphonate import. Probably responsible for the translocation of the substrate across the membrane. This chain is Putative 2-aminoethylphosphonate transport system permease protein PhnV (phnV), found in Salmonella paratyphi A (strain ATCC 9150 / SARB42).